The following is a 311-amino-acid chain: MESLNRMALELADEALEFTEELDIGAFELDTGTTVIDFGVEHDGGLEAGLLLAELQTAGLATVQTRVDTVGDATFPHVEVACDQPAVAMLGAQKAGWELAVDDYEALGSGPARALVATEGEFQAIDYVDAFEFAVLTLESTGLPTTAAASEVAARAGVTEESVFLPTYRTASVAGSVSAAARTVELAVFRLYELGYDPTDVLSASGCAPVAPVAGDEQTAIGRTNDALAHGGRVHLTVAEDFDAFDAVVSSAAARYDDPFAEVVGTDDWDAGDVDNGVFGPAQLTVDVVGGPTHAFGTVREDVLADGFGLS.

It belongs to the MCH family.

The protein resides in the cytoplasm. The catalysed reaction is 5,10-methenyl-5,6,7,8-tetrahydromethanopterin + H2O = N(5)-formyl-5,6,7,8-tetrahydromethanopterin + H(+). Catalyzes the hydrolysis of methenyl-H(4)MPT(+) to 5-formyl-H(4)MPT. This is Methenyltetrahydromethanopterin cyclohydrolase from Halobacterium salinarum (strain ATCC 29341 / DSM 671 / R1).